The following is a 57-amino-acid chain: Small ribosomal subunit protein eS27 (57 aa).

Zn(2+) contacts are provided by C10, C13, C29, and C32. The segment at 10–32 (CGDCENEQVVFGKASSVVSCAVC) adopts a C4-type zinc-finger fold.

Belongs to the eukaryotic ribosomal protein eS27 family. Part of the 30S ribosomal subunit. It depends on Zn(2+) as a cofactor.

The sequence is that of Small ribosomal subunit protein eS27 from Halorubrum lacusprofundi (strain ATCC 49239 / DSM 5036 / JCM 8891 / ACAM 34).